The sequence spans 302 residues: Aspartate carbamoyltransferase catalytic subunit (302 aa).

R53 and T54 together coordinate carbamoyl phosphate. Position 82 (K82) interacts with L-aspartate. Carbamoyl phosphate is bound by residues R103, H131, and Q134. Residues R164 and R223 each coordinate L-aspartate. The carbamoyl phosphate site is built by L260 and P261.

The protein belongs to the aspartate/ornithine carbamoyltransferase superfamily. ATCase family. In terms of assembly, heterooligomer of catalytic and regulatory chains.

It carries out the reaction carbamoyl phosphate + L-aspartate = N-carbamoyl-L-aspartate + phosphate + H(+). It participates in pyrimidine metabolism; UMP biosynthesis via de novo pathway; (S)-dihydroorotate from bicarbonate: step 2/3. Functionally, catalyzes the condensation of carbamoyl phosphate and aspartate to form carbamoyl aspartate and inorganic phosphate, the committed step in the de novo pyrimidine nucleotide biosynthesis pathway. The protein is Aspartate carbamoyltransferase catalytic subunit of Methanococcus maripaludis (strain C7 / ATCC BAA-1331).